The following is a 402-amino-acid chain: MSKLSLSSLDKTHLEGKKVLVRVDFNVPLNEDGQITDDTRIRAAIPTIEYLINHSAKVILAAHFGRPKGQVNEKMRLTPVAARLSELLGQNVALTNSCIGDEAVAQSNSLSNGDVLLLENVRFFGEEEKNDLEFAEKLASHADMYVNDAFGAAHRAHASTQGVTNYLSPSVAGFLLEKELKYLQGAVDSPNRPLAAIVGGSKVSSKIGVLDSLLDKCDKIMIGGGMIFTFYKARGLDVGKSLVEEDKLELAKDLEAKAKAKGVELLLPTDVVLADEFSPDANSKISQIDAISGNWMGLDIGPDSIKVFQNALAECKTIIWNGPMGVFEFDKFADGTNAIATTLADLSAFSEVCTIIGGGDSVAAVEKAGLAEKMSHISTGGGASLELLEGKTLPGVAALNDA.

Substrate-binding positions include 24-26 (DFN), R40, 63-66 (HFGR), R122, and R155. Residues K206, G297, E328, and 358-361 (GGDS) each bind ATP.

It belongs to the phosphoglycerate kinase family. Monomer.

It localises to the cytoplasm. The enzyme catalyses (2R)-3-phosphoglycerate + ATP = (2R)-3-phospho-glyceroyl phosphate + ADP. It participates in carbohydrate degradation; glycolysis; pyruvate from D-glyceraldehyde 3-phosphate: step 2/5. The protein is Phosphoglycerate kinase of Prochlorococcus marinus (strain AS9601).